The sequence spans 1040 residues: Multidrug resistance protein MdtB (1040 aa).

12 helical membrane-spanning segments follow: residues 25–45 (LLMA…PVAA), 347–367 (LMLA…NIPA), 369–389 (IIPG…MVFL), 396–416 (LTLM…IVVI), 440–460 (IGFT…PLLF), 472–492 (FAVT…TLTP), 537–557 (WLTL…WIVI), 863–883 (LGST…VLGV), 888–908 (FIHP…ALLA), 910–930 (IIAG…LIGI), 968–988 (ILMT…STGV), and 998–1018 (IAMV…TPVI).

This sequence belongs to the resistance-nodulation-cell division (RND) (TC 2.A.6) family. MdtB subfamily. Part of a tripartite efflux system composed of MdtA, MdtB and MdtC. MdtB forms a heteromultimer with MdtC.

It localises to the cell inner membrane. The protein is Multidrug resistance protein MdtB of Salmonella paratyphi A (strain ATCC 9150 / SARB42).